A 348-amino-acid polypeptide reads, in one-letter code: Phosphate acyltransferase (348 aa).

This sequence belongs to the PlsX family. Homodimer. Probably interacts with PlsY.

Its subcellular location is the cytoplasm. It catalyses the reaction a fatty acyl-[ACP] + phosphate = an acyl phosphate + holo-[ACP]. Its pathway is lipid metabolism; phospholipid metabolism. Catalyzes the reversible formation of acyl-phosphate (acyl-PO(4)) from acyl-[acyl-carrier-protein] (acyl-ACP). This enzyme utilizes acyl-ACP as fatty acyl donor, but not acyl-CoA. The protein is Phosphate acyltransferase of Rhizobium leguminosarum bv. trifolii (strain WSM2304).